The following is a 412-amino-acid chain: Ornithine cyclodeaminase (412 aa).

Positions 237, 238, 316, 348, 349, 350, 351, 369, 392, and 393 each coordinate NAD(+).

This sequence belongs to the AgrE/ArgZ ornithine cyclodeaminase family. NAD(+) serves as cofactor.

The enzyme catalyses L-ornithine = L-proline + NH4(+). Catalyzes the conversion of ornithine to proline, with the release of ammonia. The chain is Ornithine cyclodeaminase from Methanopyrus kandleri (strain AV19 / DSM 6324 / JCM 9639 / NBRC 100938).